The chain runs to 390 residues: Putative nickel insertion protein (390 aa).

The protein belongs to the LarC family.

The sequence is that of Putative nickel insertion protein from Myxococcus xanthus (strain DK1622).